Consider the following 290-residue polypeptide: Bifunctional protein FolD (290 aa).

NADP(+) is bound by residues 169 to 171 (GAS), Ile194, and Ile235.

Belongs to the tetrahydrofolate dehydrogenase/cyclohydrolase family. As to quaternary structure, homodimer.

The enzyme catalyses (6R)-5,10-methylene-5,6,7,8-tetrahydrofolate + NADP(+) = (6R)-5,10-methenyltetrahydrofolate + NADPH. It catalyses the reaction (6R)-5,10-methenyltetrahydrofolate + H2O = (6R)-10-formyltetrahydrofolate + H(+). Its pathway is one-carbon metabolism; tetrahydrofolate interconversion. Its function is as follows. Catalyzes the oxidation of 5,10-methylenetetrahydrofolate to 5,10-methenyltetrahydrofolate and then the hydrolysis of 5,10-methenyltetrahydrofolate to 10-formyltetrahydrofolate. In Helicobacter pylori (strain HPAG1), this protein is Bifunctional protein FolD.